The sequence spans 1851 residues: Voltage-dependent calcium channel type A subunit alpha-1 (1851 aa).

Residues 1–38 (MGGPKKEENPPGGGPTSLFILTEDNPIRKYTRFIIEWP) are Cytoplasmic-facing. The I repeat unit spans residues 25–316 (NPIRKYTRFI…LVLGVLSGEF (292 aa)). Residues 39 to 57 (PFEYAVLLTIIANCVVLAL) form a helical membrane-spanning segment. The Extracellular portion of the chain corresponds to 58–75 (EEHLPGGDKTVLAQKLEK). The helical transmembrane segment at 76-95 (TEAYFLCIFCVEASLKILAL) threads the bilayer. Over 96-107 (GLVLHKHSYLRN) the chain is Cytoplasmic. A helical transmembrane segment spans residues 108–128 (IWNIMDFFVVVTGFMTQYPQI). Residues 129-133 (GPEVD) lie on the Extracellular side of the membrane. The helical transmembrane segment at 134-152 (LRTLRAIRVLRPLKLVSGI) threads the bilayer. Topologically, residues 153–171 (PSLQVVLKSIIKAMAPLLQ) are cytoplasmic. Residues 172–191 (IGLLVLFAIVIFAIIGLEFY) form a helical membrane-spanning segment. The Extracellular portion of the chain corresponds to 192-288 (SGALHKTCYS…WTNDALGSAF (97 aa)). Asn234 and Asn235 each carry an N-linked (GlcNAc...) asparagine glycan. The chain crosses the membrane as a helical span at residues 289 to 313 (NWIYFVPLIVIGSFFMLNLVLGVLS). Topologically, residues 314-441 (GEFSNERNRV…FWIRHTVKTQ (128 aa)) are cytoplasmic. Positions 381-417 (RKKLKSLGKSKSTDTEEEEAEEDYGDDGYLKTRSKPQ) are disordered. A compositionally biased stretch (acidic residues) spans 395–406 (TEEEEAEEDYGD). An II repeat occupies 427-670 (EKRFRFWIRH…VFLAIAVDNL (244 aa)). The chain crosses the membrane as a helical span at residues 442-460 (WFYWFVIVLVFLNTVCVAV). Residues 461 to 475 (EHYGQPSFLTEFLYY) lie on the Extracellular side of the membrane. A helical transmembrane segment spans residues 476–495 (AEFIFLGLFMSEMFIKMYAL). Over 496 to 503 (GPRIYFES) the chain is Cytoplasmic. A helical membrane pass occupies residues 504–522 (SFNRFDCVVISGSIFEVIW). Residues 523-531 (SEVKGGSFG) are Extracellular-facing. Residues 532 to 550 (LSVLRALRLLRIFKVTKYW) traverse the membrane as a helical segment. Topologically, residues 551 to 569 (SSLRNLVISLLNSMRSIIS) are cytoplasmic. The helical transmembrane segment at 570–589 (LLFLLFLFILIFALLGMQLF) threads the bilayer. Residues 590 to 642 (GGQFNLPGGTPETNFNTFPIALLTVFQILTGEDWNEVMYQGIISQGGAQKGMI) lie on the Extracellular side of the membrane. A helical membrane pass occupies residues 643–667 (YSIYFIVLVLFGNYTLLNVFLAIAV). Residues 668–767 (DNLANAQELT…IRRGAHWVVN (100 aa)) lie on the Cytoplasmic side of the membrane. The disordered stretch occupies residues 710-741 (ENGDGAVAPSKSKGKKKEEEKKEEEEVTEGPK). One copy of the III repeat lies at 762-1049 (AHWVVNLPYF…IITFQEQGEA (288 aa)). Residues 768–786 (LPYFDFFIMVVISMSSIAL) form a helical membrane-spanning segment. The Extracellular portion of the chain corresponds to 787–802 (AAEDPVRENSRRNKIL). A helical membrane pass occupies residues 803–822 (NYFDYAFTGVFTIEMLLKIV). At 823-834 (DLGVILHPGSYL) the chain is on the cytoplasmic side. Residues 835 to 853 (REFWNIMDAVVVICAAVSF) form a helical membrane-spanning segment. The Extracellular portion of the chain corresponds to 854–866 (GFDMSGSSAGQNL). Asn865 carries an N-linked (GlcNAc...) asparagine glycan. The helical transmembrane segment at 867–885 (STIKSLRVLRVLRPLKTIK) threads the bilayer. Topologically, residues 886-904 (RVPKLKAVFDCVVNSLKNV) are cytoplasmic. Residues 905–924 (VNILIVYILFQFIFSVIGVQ) form a helical membrane-spanning segment. Over 925–1013 (LFNGKFFYCT…EDRGPIQNFR (89 aa)) the chain is Extracellular. A helical transmembrane segment spans residues 1014–1038 (IEMSIFYIVYFIVFPFFFVNIFVAL). Topologically, residues 1039 to 1093 (IIITFQEQGEAELQDGEIDKNQKSCIDFTIGARPLERYMPKNRNTFKYKVWRIVV) are cytoplasmic. Residues 1086 to 1347 (YKVWRIVVST…DNFDYLTRDS (262 aa)) form an IV repeat. Residues 1094–1122 (STPFEYFIMMLIVFNTLLLMMKYHNQGDM) form a helical membrane-spanning segment. Topologically, residues 1123–1127 (YEKSL) are extracellular. Residues 1128-1147 (KYINMGFTGMFSVETVLKII) form a helical membrane-spanning segment. Residues 1148 to 1155 (GFGVKNFF) are Cytoplasmic-facing. The helical transmembrane segment at 1156 to 1174 (KDPWNIFDLITVLGSIVDA) threads the bilayer. The Extracellular portion of the chain corresponds to 1175–1184 (LWMEFGHDDS). Residues 1185–1203 (NSINVGFLRLFRAARLIKL) form a helical membrane-spanning segment. Over 1204 to 1222 (LRQGYTIRILLWTFVQSFK) the chain is Cytoplasmic. A helical membrane pass occupies residues 1223-1242 (ALPYVCLLIAMLFFIYAIIG). At 1243-1308 (MQVFGNIKLG…DAEKAPGEYC (66 aa)) the chain is on the extracellular side. Residues 1306–1348 (EYCGSTLAYAYFVSFIFFCSFLMLNLFVAVIMDNFDYLTRDSS) are phenylalkylamine binding. A helical membrane pass occupies residues 1309-1333 (GSTLAYAYFVSFIFFCSFLMLNLFV). Over 1334–1851 (AVIMDNFDYL…HSDSDEEDWC (518 aa)) the chain is Cytoplasmic. An EF-hand domain is found at 1353–1388 (HHLDEFVRIWAEYDPNATGKIHYTEMYDMLKNMDPP). Positions 1366, 1368, 1370, 1372, and 1377 each coordinate Ca(2+). 4 disordered regions span residues 1513–1572 (DASR…HHDI), 1588–1653 (TRHP…SPAR), 1685–1764 (RAGI…DRDR), and 1823–1851 (VLPSPVLNGFKPKSGLNPRHSDSDEEDWC). Residues 1589–1600 (RHPRHGNSHPRY) show a composition bias toward basic residues. Residues 1604–1619 (SWSASTSPARSPSPSR) are compositionally biased toward low complexity. 2 stretches are compositionally biased toward polar residues: residues 1637–1649 (YGTTSLCQRSRSP) and 1698–1710 (KPSTLQLKPTNIN). Positions 1734 to 1764 (HHRDLLRDPRDMYYSSRERERDRERLRDRDR) are enriched in basic and acidic residues.

The protein belongs to the calcium channel alpha-1 subunit (TC 1.A.1.11) family. Expressed widely in the embryonic nervous system.

The protein localises to the membrane. Voltage-sensitive calcium channels (VSCC) mediate the entry of calcium ions into excitable cells and are also involved in a variety of calcium-dependent processes, including muscle contraction, neurotransmitter release, gene expression, cell motility, cell division and cell death. Probably encodes a dihydropyridine-insensitive current. Vital for survival to adulthood. The chain is Voltage-dependent calcium channel type A subunit alpha-1 (cac) from Drosophila melanogaster (Fruit fly).